Consider the following 325-residue polypeptide: Eukaryotic translation initiation factor 3 subunit I (325 aa).

5 WD repeats span residues 8–47 (GHERSITQIKYNREGDLLFTVAKDPIVNVWYSVNGERLGT), 50–89 (GHTGAVWCVDADWDTRHVLTGSADNSCRLWDCETGKQLAL), 144–183 (CSDSKITSAVWGPLGEFIIAGHENGELNQFSAKSGEQLSN), 186–225 (EHTKQINDIQTSRDMTMFITASKDNTAKLFDCTSLKHLKT), and 283–324 (GHFG…FEFE).

The protein belongs to the eIF-3 subunit I family. As to quaternary structure, component of the eukaryotic translation initiation factor 3 (eIF-3) complex, which is composed of 13 subunits: EIF3A, EIF3B, EIF3C, EIF3D, EIF3E, EIF3F, EIF3G, EIF3H, EIF3I, EIF3J, EIF3K, EIF3L and EIF3M.

The protein localises to the cytoplasm. Component of the eukaryotic translation initiation factor 3 (eIF-3) complex, which is involved in protein synthesis of a specialized repertoire of mRNAs and, together with other initiation factors, stimulates binding of mRNA and methionyl-tRNAi to the 40S ribosome. The eIF-3 complex specifically targets and initiates translation of a subset of mRNAs involved in cell proliferation. This Taeniopygia guttata (Zebra finch) protein is Eukaryotic translation initiation factor 3 subunit I.